We begin with the raw amino-acid sequence, 377 residues long: Mitogen-activated protein kinase pmk-1 (377 aa).

The Protein kinase domain occupies 35–319 (YINLTPIGTG…AKEAMEHEYL (285 aa)). ATP contacts are provided by residues 41–49 (IGTGAYGTV) and K64. Catalysis depends on D179, which acts as the Proton acceptor. T191 carries the post-translational modification Phosphothreonine. The TXY signature appears at 191–193 (TGY). Y193 is modified (phosphotyrosine).

The protein belongs to the protein kinase superfamily. CMGC Ser/Thr protein kinase family. MAP kinase subfamily. Interacts with transcription factor atf-7; perhaps in a manner dependent on dual specificity protein kinase sek-1. The cofactor is Mg(2+). Requires Mn(2+) as cofactor. In terms of processing, dually phosphorylated on Thr-191 and Tyr-193, probably by sek-1, which activates the enzyme. Increased phosphorylation in response to the heavy metal arsenite. Increased phosphorylation in response to intestinal colonization by probiotic Lactobacillus fermentum strain JDFM216. As to expression, expressed in intestinal cells.

Its subcellular location is the nucleus. It catalyses the reaction L-seryl-[protein] + ATP = O-phospho-L-seryl-[protein] + ADP + H(+). It carries out the reaction L-threonyl-[protein] + ATP = O-phospho-L-threonyl-[protein] + ADP + H(+). With respect to regulation, activated by phosphorylation on threonine and tyrosine. Inhibited by pyridinyl-imidazole related compounds. Functionally, serine/threonine kinase which responds to activation by environmental stress and pro-inflammatory cytokines by phosphorylating downstream targets. As part of a MAP kinase signaling pathway, plays a role in modulation of lifespan and immunity. Phosphorylates skn-1 which probably regulates skn-1 nuclear translocation in response to oxidative stress. Probably by activating skn-1, involved in the up-regulation of gcs-1 and glutathione-S-transferase gst-4 expression upon bacteria infection. Up-regulates expression of gcs-1 in intestinal cells upon arsenite treatment. Functions downstream of the MAPKK sek-1 and the MAPKKK nsy-1 as the MAP kinase which regulates pathogen resistance and responses to oxidative stress. Required for expression of antimicrobial peptide nlp-29 in response to fungal infection or physical injury. Involved in resistance to the nematotoxic C.cinerea galectin (Cgl2). May play a redundant role with other MAP kinases in susceptibility to anoxia, downstream of tir-1/nsy-1. Phosphorylates transcription factor rnt-1 during oxidative stress which results in rnt-1 stabilization in the intestine. Phosphorylates transcription factor atf-7 during pathogen infection resulting in modulation of target genes. Probably downstream of nsy-1 and sek-1, involved in germline apoptosis induced by heavy metals, such as Cu(2+). Regulates the basal expression of immune effector genes including irg-4, irg-5, mul-1 and drd-50. The sequence is that of Mitogen-activated protein kinase pmk-1 from Caenorhabditis elegans.